Consider the following 466-residue polypeptide: Ribulose bisphosphate carboxylase large chain (466 aa).

Residue K5 is modified to N6,N6,N6-trimethyllysine. Substrate contacts are provided by N114 and T164. The active-site Proton acceptor is K166. K168 is a binding site for substrate. Residues K192, D194, and E195 each coordinate Mg(2+). K192 is modified (N6-carboxylysine). The Proton acceptor role is filled by H285. Positions 286, 318, and 370 each coordinate substrate.

This sequence belongs to the RuBisCO large chain family. Type I subfamily. Heterohexadecamer of 8 large chains and 8 small chains; disulfide-linked. The disulfide link is formed within the large subunit homodimers. Mg(2+) is required as a cofactor. Post-translationally, the disulfide bond which can form in the large chain dimeric partners within the hexadecamer appears to be associated with oxidative stress and protein turnover.

The protein localises to the plastid. The protein resides in the chloroplast. The catalysed reaction is 2 (2R)-3-phosphoglycerate + 2 H(+) = D-ribulose 1,5-bisphosphate + CO2 + H2O. It catalyses the reaction D-ribulose 1,5-bisphosphate + O2 = 2-phosphoglycolate + (2R)-3-phosphoglycerate + 2 H(+). RuBisCO catalyzes two reactions: the carboxylation of D-ribulose 1,5-bisphosphate, the primary event in carbon dioxide fixation, as well as the oxidative fragmentation of the pentose substrate in the photorespiration process. Both reactions occur simultaneously and in competition at the same active site. The protein is Ribulose bisphosphate carboxylase large chain of Drosera binata (Fork-leaved sundew).